A 79-amino-acid polypeptide reads, in one-letter code: Small ribosomal subunit protein bS18 (79 aa).

Belongs to the bacterial ribosomal protein bS18 family. In terms of assembly, part of the 30S ribosomal subunit. Forms a tight heterodimer with protein bS6.

In terms of biological role, binds as a heterodimer with protein bS6 to the central domain of the 16S rRNA, where it helps stabilize the platform of the 30S subunit. The sequence is that of Small ribosomal subunit protein bS18 from Rhodopseudomonas palustris (strain HaA2).